A 539-amino-acid polypeptide reads, in one-letter code: Chaperonin GroEL (539 aa).

Residues 29 to 32, 86 to 90, G414, and D493 each bind ATP; these read TIGP and DGTTT.

It belongs to the chaperonin (HSP60) family. As to quaternary structure, forms a cylinder of 14 subunits composed of two heptameric rings stacked back-to-back. Interacts with the co-chaperonin GroES.

It localises to the cytoplasm. It catalyses the reaction ATP + H2O + a folded polypeptide = ADP + phosphate + an unfolded polypeptide.. In terms of biological role, together with its co-chaperonin GroES, plays an essential role in assisting protein folding. The GroEL-GroES system forms a nano-cage that allows encapsulation of the non-native substrate proteins and provides a physical environment optimized to promote and accelerate protein folding. In Staphylococcus aureus, this protein is Chaperonin GroEL.